The chain runs to 194 residues: Protein GrpE (194 aa).

Over residues 1-13 the composition is skewed to polar residues; the sequence is MENTQENPTSQNP. The interval 1-50 is disordered; the sequence is MENTQENPTSQNPKPAEETARQAAEAAAPQQEAAANAATDSPASAEQAAL. A compositionally biased stretch (low complexity) spans 21-50; it reads RQAAEAAAPQQEAAANAATDSPASAEQAAL.

The protein belongs to the GrpE family. Homodimer.

The protein resides in the cytoplasm. In terms of biological role, participates actively in the response to hyperosmotic and heat shock by preventing the aggregation of stress-denatured proteins, in association with DnaK and GrpE. It is the nucleotide exchange factor for DnaK and may function as a thermosensor. Unfolded proteins bind initially to DnaJ; upon interaction with the DnaJ-bound protein, DnaK hydrolyzes its bound ATP, resulting in the formation of a stable complex. GrpE releases ADP from DnaK; ATP binding to DnaK triggers the release of the substrate protein, thus completing the reaction cycle. Several rounds of ATP-dependent interactions between DnaJ, DnaK and GrpE are required for fully efficient folding. This chain is Protein GrpE, found in Paraburkholderia xenovorans (strain LB400).